Here is a 42-residue protein sequence, read N- to C-terminus: Photosystem I reaction center subunit IX (42 aa).

A helical membrane pass occupies residues 7–27; sequence YLSVAPVLSTLWFGALAGLLI.

This sequence belongs to the PsaJ family.

The protein resides in the plastid. It localises to the chloroplast thylakoid membrane. In terms of biological role, may help in the organization of the PsaE and PsaF subunits. This chain is Photosystem I reaction center subunit IX, found in Guizotia abyssinica (Niger).